Consider the following 67-residue polypeptide: Putative cytosolic sulfotransferase 2 (67 aa).

31 to 33 contributes to the 3'-phosphoadenylyl sulfate binding site; the sequence is RDG.

Belongs to the sulfotransferase 1 family.

It is found in the cytoplasm. Functionally, sulfotransferase that utilizes 3'-phospho-5'-adenylyl sulfate (PAPS) as sulfonate donor. The chain is Putative cytosolic sulfotransferase 2 (SOT2) from Arabidopsis thaliana (Mouse-ear cress).